Here is a 273-residue protein sequence, read N- to C-terminus: 4-hydroxy-tetrahydrodipicolinate reductase (273 aa).

NAD(+)-binding positions include 12-17 (GAGGRM) and E38. R39 serves as a coordination point for NADP(+). NAD(+) is bound by residues 102–104 (GTT) and 126–129 (AANF). H159 (proton donor/acceptor) is an active-site residue. Residue H160 coordinates (S)-2,3,4,5-tetrahydrodipicolinate. K163 acts as the Proton donor in catalysis. 169–170 (GT) provides a ligand contact to (S)-2,3,4,5-tetrahydrodipicolinate.

This sequence belongs to the DapB family. As to quaternary structure, homotetramer.

It localises to the cytoplasm. The enzyme catalyses (S)-2,3,4,5-tetrahydrodipicolinate + NAD(+) + H2O = (2S,4S)-4-hydroxy-2,3,4,5-tetrahydrodipicolinate + NADH + H(+). It carries out the reaction (S)-2,3,4,5-tetrahydrodipicolinate + NADP(+) + H2O = (2S,4S)-4-hydroxy-2,3,4,5-tetrahydrodipicolinate + NADPH + H(+). Its pathway is amino-acid biosynthesis; L-lysine biosynthesis via DAP pathway; (S)-tetrahydrodipicolinate from L-aspartate: step 4/4. In terms of biological role, catalyzes the conversion of 4-hydroxy-tetrahydrodipicolinate (HTPA) to tetrahydrodipicolinate. The sequence is that of 4-hydroxy-tetrahydrodipicolinate reductase from Pectobacterium carotovorum subsp. carotovorum (strain PC1).